A 136-amino-acid polypeptide reads, in one-letter code: Protein PsiE (136 aa).

4 helical membrane passes run 15–35 (ILQN…VVFL), 55–75 (YELV…ALIV), 83–103 (HFPL…LIIV), and 108–128 (PMDV…LWLC).

This sequence belongs to the PsiE family.

The protein resides in the cell inner membrane. The sequence is that of Protein PsiE from Salmonella agona (strain SL483).